Consider the following 126-residue polypeptide: MRHKKRGRRLSRDTSHRQAMIKNMLVSLFKHERIETTVPRAKELRPVAEKVITLGKRGDLHARRQALSILNGDKEVVHKLFTDLAERNKDRQGGYTRILKTRFRYGDCAPMSFIELVERDATSAAE.

Belongs to the bacterial ribosomal protein bL17 family. Part of the 50S ribosomal subunit. Contacts protein L32.

The polypeptide is Large ribosomal subunit protein bL17 (Magnetococcus marinus (strain ATCC BAA-1437 / JCM 17883 / MC-1)).